Here is a 56-residue protein sequence, read N- to C-terminus: MRYTTDEGGRLNNFAIEPKVYQAQPWTPQQKVRAALLVGGGLLLVAGLVAIAVGVS.

The Cytoplasmic segment spans residues 1–33; that stretch reads MRYTTDEGGRLNNFAIEPKVYQAQPWTPQQKVR. The chain crosses the membrane as a helical span at residues 34–54; that stretch reads AALLVGGGLLLVAGLVAIAVG. Over 55–56 the chain is Extracellular; the sequence is VS.

Part of photosystem II (PSII) assembly intermediate complex PSII-I; crystallized from a strain without psbJ, it forms monomeric PSII before addition of the oxygen evolving complex. PSII-I includes 3 assembly factors not found in mature PSII (Psb27, Psb28 and Psb34). The N-terminus of Psb34 (this protein) binds to CP47 (psbB) in close proximity to PsbH on the cytoplasmic face of PSII.

The protein localises to the cellular thylakoid membrane. Its function is as follows. Involved in photosystem II (PSII) assembly and/or repair, probably in conversion of late PSII assembly intermediates into mature dimeric PSII. In Thermosynechococcus vestitus (strain NIES-2133 / IAM M-273 / BP-1), this protein is Photosystem II assembly protein Psb34.